A 100-amino-acid chain; its full sequence is Signal recognition particle 19 kDa protein (100 aa).

This sequence belongs to the SRP19 family. In terms of assembly, part of the signal recognition particle protein translocation system, which is composed of SRP and FtsY. Archaeal SRP consists of a 7S RNA molecule of 300 nucleotides and two protein subunits: SRP54 and SRP19.

The protein localises to the cytoplasm. Functionally, involved in targeting and insertion of nascent membrane proteins into the cytoplasmic membrane. Binds directly to 7S RNA and mediates binding of the 54 kDa subunit of the SRP. The chain is Signal recognition particle 19 kDa protein from Caldivirga maquilingensis (strain ATCC 700844 / DSM 13496 / JCM 10307 / IC-167).